The sequence spans 242 residues: uncharacterized protein (242 aa).

S-adenosyl-L-methionine is bound by residues Gly-198, Ile-218, and Leu-227.

It belongs to the class IV-like SAM-binding methyltransferase superfamily. RNA methyltransferase TrmH family.

This is an uncharacterized protein from Mycoplasma genitalium (strain ATCC 33530 / DSM 19775 / NCTC 10195 / G37) (Mycoplasmoides genitalium).